We begin with the raw amino-acid sequence, 310 residues long: Homocysteine S-methyltransferase (310 aa).

Residues 1–310 (MSQNNPLRAL…ADIAALKARS (310 aa)) enclose the Hcy-binding domain. 3 residues coordinate Zn(2+): C229, C295, and C296.

In terms of assembly, monomer. Requires Zn(2+) as cofactor.

The enzyme catalyses S-methyl-L-methionine + L-homocysteine = 2 L-methionine + H(+). In terms of biological role, catalyzes methyl transfer from S-methylmethionine or S-adenosylmethionine (less efficient) to homocysteine, selenohomocysteine and less efficiently selenocysteine. The sequence is that of Homocysteine S-methyltransferase (mmuM) from Escherichia coli (strain K12).